Here is a 251-residue protein sequence, read N- to C-terminus: Malonyl-[acyl-carrier protein] O-methyltransferase (251 aa).

The protein belongs to the methyltransferase superfamily.

It catalyses the reaction malonyl-[ACP] + S-adenosyl-L-methionine = malonyl-[ACP] methyl ester + S-adenosyl-L-homocysteine. Its pathway is cofactor biosynthesis; biotin biosynthesis. Its function is as follows. Converts the free carboxyl group of a malonyl-thioester to its methyl ester by transfer of a methyl group from S-adenosyl-L-methionine (SAM). It allows to synthesize pimeloyl-ACP via the fatty acid synthetic pathway. This Erwinia billingiae (strain Eb661) protein is Malonyl-[acyl-carrier protein] O-methyltransferase.